The primary structure comprises 495 residues: Cobyric acid synthase (495 aa).

The region spanning 249-443 (EININVIRLP…LHGLFDNGAW (195 aa)) is the GATase cobBQ-type domain. The Nucleophile role is filled by Cys-330. The active site involves His-435.

This sequence belongs to the CobB/CobQ family. CobQ subfamily.

It participates in cofactor biosynthesis; adenosylcobalamin biosynthesis. Functionally, catalyzes amidations at positions B, D, E, and G on adenosylcobyrinic A,C-diamide. NH(2) groups are provided by glutamine, and one molecule of ATP is hydrogenolyzed for each amidation. The protein is Cobyric acid synthase of Gloeothece citriformis (strain PCC 7424) (Cyanothece sp. (strain PCC 7424)).